Consider the following 87-residue polypeptide: Defensin-like protein 218 (87 aa).

The N-terminal stretch at 1–19 (MKTIVCFLTILILVSSCES) is a signal peptide. 3 disulfide bridges follow: cysteine 51/cysteine 70, cysteine 54/cysteine 75, and cysteine 58/cysteine 77.

The protein belongs to the DEFL family.

The protein localises to the secreted. The polypeptide is Defensin-like protein 218 (Arabidopsis thaliana (Mouse-ear cress)).